The following is a 1189-amino-acid chain: MYIKSIVLEGFKSYAQRTEIRDFDPLFNAITGLNGSGKSNILDSICFLLGISNLSQVRASSLQDLVYKNGQAGVNKATVSITFDNSDKKNSPLGFENNDEITITRQVIVGGRNKYLINGMNASNNRVQDLFGSVGLNVNNPHFLIMQGQITKVLNMKPTEILAMIEEAAGTRMYECKKITAHKTIEKKESKLDEIRRIITEEISPTLEKLKEARASYLEYQKMTREVENLRRIYVAFQYVRAEEIKDRSTNALKEAQANKKKIFESMAENEKKVKELAQQIEETEKKNNEEFGAKLHSLEAAFSELQRVDAKVRSDLDHRKQNLNSEENRLKELIKIMQEEFKAFTSKEKEIKKIKEGLNGLQEESKKDAEALASAQQHFNAVSAGLSSNDSGQGTSLADQMMTCKNEISKAATEAKQAQMKLKYAQQELKTKQAEVKKMDGSYKEDQEAFEAIRKTKEKLQDEMKKLKYEEAEQEAHLAKKKQLSSEISSLRELCESIEAKHPYLRFEYKNPEKNWNPNCVKGLVVTLITVKDISTSKALEAVAGGKLYNIVVDTEATGKKILEKGQLKHRYTIIPLSKISANSIGHEIISLAKNLIGHREVHIAISLIDYNSELQKAMEYVFGTTLVCSSMDNAKKVTFDKRIMRKTVTLQGDIFDPQGTLSGGASSHVTPILSKLKTMRDAEDELKIKTSQLEATEKELANLKNMAEKYQHLKQQWEMKSEEAELLQTKIQQSAYHKQQEDLLALKKTIAECEETLKKTEESQRKAEEEYKALENKMKNAEAERGKEIKNAQQKLNSAKKKADDSSRKMKEKQQEVEALVLELEQLKQEQASYKQQSEAAQQAIASLKEQVSALEAEAVKTRESLKNAENELSSEKGLMEERTKDIKAKSAKIEKYREQNNELQLSINALEHDINKYQQETADASSTLDKLLKEYKWIASEKELFGQADTTYDFEANNPKETGQKLQKLLTKKEKLEKSLNMRAMNLLSEAEERYNDLMKKKRMVENDKIKILATIEELDRKKNKALHIAWEKVNKDFGSIFSMLLPGAKAMLVPSKKQNILDGLEFRVGLGDIWKENLTELSGGQRSLAALSLILAILLFKPAPIYILDEVDAALDLSHTQNIGQMLHAHFKQSQFLVVSLKDGMFNNANVLYRTKFVDGISTVSRHCQLKKKQPLSEASNNKDE.

Gly-32–Ser-39 contributes to the ATP binding site. Residues Lys-211–His-503 are a coiled coil. In terms of domain architecture, SMC hinge spans Val-522–Val-639. The stretch at Ile-674–Leu-1030 forms a coiled coil. Basic and acidic residues-rich tracts occupy residues Asn-782–Lys-792 and Lys-803–Glu-814. Disordered stretches follow at residues Asn-782–Glu-814 and Ser-867–Thr-886.

It belongs to the SMC family. SMC2 subfamily. As to quaternary structure, forms a heterodimer with SMC4. Component of the condensin complex, which contains the SMC2 and SMC4 heterodimer, and probably some non SMC subunits that regulate the complex.

The protein localises to the nucleus. It is found in the cytoplasm. Its subcellular location is the chromosome. Its function is as follows. Central component of the condensin complex, a complex required for conversion of interphase chromatin into mitotic-like condense chromosomes. The condensin complex probably introduces positive supercoils into relaxed DNA in the presence of type I topoisomerases and converts nicked DNA into positive knotted forms in the presence of type II topoisomerases. This chain is Structural maintenance of chromosomes protein 2 (SMC2), found in Gallus gallus (Chicken).